Here is a 447-residue protein sequence, read N- to C-terminus: Voltage-gated purine nucleotide uniporter SLC17A9 (447 aa).

The tract at residues 1-26 (MPSQRSSLMQPIPEETRKTPSAAAED) is disordered. A run of 11 helical transmembrane segments spans residues 40–60 (ILLL…VCTV), 74–94 (GIVL…GGHL), 103–123 (VILL…LLAH), 129–149 (LAFL…YFPA), 169–189 (TVGA…SVLL), 192–212 (CGWQ…AYYV), 252–272 (VWAA…LLSW), 287–307 (WVFN…SGFI), 327–347 (VMGL…TSFL), 380–400 (GFLF…GVCL), and 413–433 (CVFH…LVFG).

Belongs to the major facilitator superfamily. Sodium/anion cotransporter family. In terms of tissue distribution, in brain, specifically expressed in the medulla and is associated with chromaffin granules (at protein level). Predominantly expressed in adrenal gland, brain and thyroid.

It localises to the cytoplasmic vesicle. The protein localises to the secretory vesicle. The protein resides in the chromaffin granule membrane. Its subcellular location is the secretory vesicle membrane. It is found in the lysosome membrane. The catalysed reaction is ATP(in) = ATP(out). The enzyme catalyses ADP(in) = ADP(out). It carries out the reaction GTP(in) = GTP(out). With respect to regulation, activity is chloride-dependent. Functionally, voltage-gated ATP nucleotide uniporter that can also transport the purine nucleotides ADP and GTP. Uses the membrane potential as the driving force to control ATP accumulation in lysosomes and secretory vesicles. By controlling ATP storage in lysosomes, regulates ATP-dependent proteins of these organelles. Also indirectly regulates the exocytosis of ATP through its import into lysosomes in astrocytes and secretory vesicles such as adrenal chromaffin granules, mucin granules and synaptic vesicles. The chain is Voltage-gated purine nucleotide uniporter SLC17A9 from Mus musculus (Mouse).